The chain runs to 344 residues: Protein POLAR LOCALIZATION DURING ASYMMETRIC DIVISION AND REDISTRIBUTION (344 aa).

T19 is modified (phosphothreonine; by ASK7). S79 bears the Phosphoserine; by ASK7 mark. 2 positions are modified to phosphothreonine; by ASK7: T84 and T86. 2 positions are modified to phosphoserine; by ASK7: S91 and S94. Phosphothreonine; by ASK7 occurs at positions 193, 217, and 233. S235 is subject to Phosphoserine; by ASK7. Residues 262-297 (LETRQQEELVKLETALNRVERRLQEKETEVSWWKDA) are a coiled coil. Phosphoserine; by ASK7 occurs at positions 308, 309, 320, 321, and 336.

As to quaternary structure, component of a complex made of POLAR, BASL, ASK7/BIN2 and ASK3/SK12. Interacts with BASL, ASK7/BIN2 and ASK3/SK12. Post-translationally, phosphorylation by ASK7/BIN2 is increases turnover. As to expression, expressed in stomatal lineage cells with asymmetric division potential.

It localises to the cytoplasm. The protein resides in the cell cortex. Its function is as follows. Regulates asymmetric cell division (ACD), especially in stomatal-lineage cells. Acts as a stomatal lineage scaffold which regulates subcellular localization and transient polarization of kinases (e.g. ASK7/BIN2 and ASK3/SK12) involved in ACD in a BASL-dependent manner. Promotes the differentiation of both pavement cells and stomata. In Arabidopsis thaliana (Mouse-ear cress), this protein is Protein POLAR LOCALIZATION DURING ASYMMETRIC DIVISION AND REDISTRIBUTION.